A 124-amino-acid chain; its full sequence is Small ribosomal subunit protein uS13 (124 aa).

The segment at 98 to 124 is disordered; it reads VRGQRTRCNARTRKGPRKTVGAKRKEK.

The protein belongs to the universal ribosomal protein uS13 family. As to quaternary structure, part of the 30S ribosomal subunit. Forms a loose heterodimer with protein S19. Forms two bridges to the 50S subunit in the 70S ribosome.

Functionally, located at the top of the head of the 30S subunit, it contacts several helices of the 16S rRNA. In the 70S ribosome it contacts the 23S rRNA (bridge B1a) and protein L5 of the 50S subunit (bridge B1b), connecting the 2 subunits; these bridges are implicated in subunit movement. Contacts the tRNAs in the A and P-sites. The chain is Small ribosomal subunit protein uS13 from Dictyoglomus thermophilum (strain ATCC 35947 / DSM 3960 / H-6-12).